The sequence spans 605 residues: METDIVINLRCKLKEAEEERLKAAQYGLQLVESQNELQNQLDKCRNEMMTMTESYEQEKYTLQREVELKSRMLESLSCECEAIKQQQKMHLEKLEEQLSRSHGQEVNELKSKIEKLKVELDEARLSEKQLKHQVDHQKELLSCKSEELRVMSERVQESMSSEMLALQIELTEMESMKTTLKEEVNELQYRQEQLELLITNLMRQVDRLKEEKEEREKEAVSYYNALEKARVANQDLQVQLDQALQQALDPNSKGNSLFAEVEDRRAAMERQLISMKVKYQSLKKQNVFNREQMQRMKLQIATLLQMKGSQTEFEQQERLLAMLEQKNGEIKHLLGEIRNLEKFKNLYESMESKPSVDSGALEDNTYYTDLLQMKLDNLNKEIESTKGELSIQRMKALFESQRALDIERKLFANERCLQLSESENMKLRAKLDELKLKYEPEETVEVPVLKKRREVLPVDITTSKDTCVNNSAVGGEVYRLPPQKEETQCCPNSLEDNNLQLEKSVSIHTPIVSLSPHKNLPVDMQLKKEKKCVKLVGVPADAEALSERSGNTLNSPRLAAESKLQTEVKEGKETASKLEKETCKKSHPILYVSSKSTPETQCPQQ.

At methionine 1 the chain carries N-acetylmethionine. Residues 3–442 (TDIVINLRCK…ELKLKYEPEE (440 aa)) adopt a coiled-coil conformation. Phosphoserine occurs at positions 513, 515, and 555. The interval 545–581 (LSERSGNTLNSPRLAAESKLQTEVKEGKETASKLEKE) is disordered. Positions 564 to 581 (LQTEVKEGKETASKLEKE) are enriched in basic and acidic residues.

It belongs to the Spindly family. As to quaternary structure, interacts with KNTC1 and ZW10. These interactions appear weak and may be transient or indirect. Interacts with dynein intermediate chain and dynactin (DCTN1). Interacts with the catalytically active form of USP45. Post-translationally, monoubiquitinated with'Lys-48' linkage. Deubiquitinated by USP45.

It localises to the cytoplasm. It is found in the cytoskeleton. The protein resides in the microtubule organizing center. Its subcellular location is the centrosome. The protein localises to the chromosome. It localises to the centromere. It is found in the kinetochore. The protein resides in the nucleus. Its subcellular location is the spindle pole. Required for the localization of dynein and dynactin to the mitotic kintochore. Dynein is believed to control the initial lateral interaction between the kinetochore and spindle microtubules and to facilitate the subsequent formation of end-on kinetochore-microtubule attachments mediated by the NDC80 complex. Also required for correct spindle orientation. Does not appear to be required for the removal of spindle assembly checkpoint (SAC) proteins from the kinetochore upon bipolar spindle attachment. Acts as an adapter protein linking the dynein motor complex to various cargos and converts dynein from a non-processive to a highly processive motor in the presence of dynactin. Facilitates the interaction between dynein and dynactin and activates dynein processivity (the ability to move along a microtubule for a long distance without falling off the track). Plays a role in cell migration. This is Protein Spindly from Macaca fascicularis (Crab-eating macaque).